We begin with the raw amino-acid sequence, 84 residues long: Cell division topological specificity factor (84 aa).

It belongs to the MinE family.

In terms of biological role, prevents the cell division inhibition by proteins MinC and MinD at internal division sites while permitting inhibition at polar sites. This ensures cell division at the proper site by restricting the formation of a division septum at the midpoint of the long axis of the cell. This is Cell division topological specificity factor from Pseudomonas syringae pv. tomato (strain ATCC BAA-871 / DC3000).